A 158-amino-acid polypeptide reads, in one-letter code: Cyclic pyranopterin monophosphate synthase (158 aa).

Residues 74–76 (MCH) and 112–113 (ME) each bind substrate. Aspartate 127 is an active-site residue.

Belongs to the MoaC family. In terms of assembly, homohexamer; trimer of dimers.

It carries out the reaction (8S)-3',8-cyclo-7,8-dihydroguanosine 5'-triphosphate = cyclic pyranopterin phosphate + diphosphate. Its pathway is cofactor biosynthesis; molybdopterin biosynthesis. Its function is as follows. Catalyzes the conversion of (8S)-3',8-cyclo-7,8-dihydroguanosine 5'-triphosphate to cyclic pyranopterin monophosphate (cPMP). The protein is Cyclic pyranopterin monophosphate synthase of Helicobacter pylori (strain Shi470).